The chain runs to 884 residues: Kinesin-like protein KIN-7C (884 aa).

One can recognise a Kinesin motor domain in the interval 33–355 (RIQVLVRLRP…LLFGSCAKEV (323 aa)). 119–126 (GQTSSGKT) contacts ATP. Positions 364–435 (VMSDKALVKH…LQDLLQSVGD (72 aa)) form a coiled coil. The interval 434–530 (GDHDLNRQVQ…VNSRHSRPSG (97 aa)) is disordered. Over residues 449–460 (RSPPSVGMPPSV) the composition is skewed to low complexity. The segment covering 461–483 (SRDDSSQVSHDDSDLYKEVRCIE) has biased composition (basic and acidic residues). Residues 498 to 523 (GESSSPQDSNMNSGLHGNDSNASVNS) show a composition bias toward polar residues.

It belongs to the TRAFAC class myosin-kinesin ATPase superfamily. Kinesin family. KIN-7 subfamily.

This chain is Kinesin-like protein KIN-7C, found in Oryza sativa subsp. japonica (Rice).